The sequence spans 452 residues: UPF0210 protein Daud_1353 (452 aa).

It belongs to the UPF0210 family. Homodimer.

The sequence is that of UPF0210 protein Daud_1353 from Desulforudis audaxviator (strain MP104C).